A 399-amino-acid chain; its full sequence is MSFEISVEEIEELIETGNLNIDHALKELGATSQSSLNKPPSQSSRTEGNDGGTKISRNPAPVEAPAHTSTAQRSHNEENESGRQNLDSLSMISNKPQTGTLLMGSDTQLPSPSKTYQGLILDAKKRALNEPRRDQKITNEHGSMNDTRIFKRGGNIDTRKEAWVTQNQRSRTQPPLQDIEESTRFHGLTEEPQYPSGAIHAAHQSNQLPLSKNAHVEDVPKFANYASEILDAIKALEVRLDRIEGKVDKIMLTQNTIQQTKNDTQQIKGSLATIEGLITTMKIMDPGVPSKVSLRSLNKESEQVPIIVTGNGDVSKFVDQDNTITLDSLARPILSGTKQKTDERRAGVRIDALKITVSEMIRDLFGDCDKSKKLLESINMATTEQDINLIKTNALRSIT.

2 stretches are compositionally biased toward polar residues: residues 30 to 46 (ATSQ…SSRT) and 82 to 112 (GRQN…LPSP). The interval 30–112 (ATSQSSLNKP…MGSDTQLPSP (83 aa)) is disordered. Residues 224–287 (NYASEILDAI…ITTMKIMDPG (64 aa)) form a multimerization region. The stretch at 226–253 (ASEILDAIKALEVRLDRIEGKVDKIMLT) forms a coiled coil.

Belongs to the rubulavirus/avulavirus P protein family. As to quaternary structure, homotetramer. Interacts (via multimerization domain) with polymerase L; this interaction forms the polymerase L-P complex. Interacts (via N-terminus) with N0 (via Ncore); this interaction allows P to chaperon N0 to avoid N polymerization before encapsidation. Interacts (via C-terminus) with N-RNA template; this interaction positions the polymerase on the template for both transcription and replication.

In terms of biological role, essential cofactor of the RNA polymerase L that plays a central role in the transcription and replication by forming the polymerase complex with RNA polymerase L and recruiting L to the genomic N-RNA template for RNA synthesis. Also plays a central role in the encapsidation of nascent RNA chains by forming the encapsidation complex with the nucleocapsid protein N (N-P complex). Acts as a chaperone for newly synthesized free N protein, so-called N0, allowing encapsidation of nascent RNA chains during replication. The nucleoprotein protein N prevents excessive phosphorylation of P, which leads to down-regulation of viral transcription/ replication. Participates, together with N, in the formation of viral factories (viroplasms), which are large inclusions in the host cytoplasm where replication takes place. This chain is Phosphoprotein (P/V), found in Human parainfluenza 4a virus (strain Toshiba) (HPIV-4a).